Here is a 393-residue protein sequence, read N- to C-terminus: Zinc finger CCCH domain-containing protein 2 (393 aa).

Positions 1–71 (MDVVCTEHQM…NRENKEYCYD (71 aa)) are disordered. Residues 20 to 37 (RKLLLSSKSFPSDSSSPR) are compositionally biased toward low complexity. Positions 60–69 (DNNRENKEYC) are enriched in basic and acidic residues. 2 consecutive C3H1-type zinc fingers follow at residues 122-150 (QYSG…HGVF) and 159-181 (YRTE…AHSP).

Interacts with MARD1/FLZ9 and RD21A. As to expression, specifically expressed in seeds.

The protein resides in the nucleus. Functionally, probable transcription repressor that functions as a negative regulator of phytochrome-mediated promotion of seed germination. Inhibits seed germination by regulating the expression of gibberellic acid (GA) and abscisic acid (ABA) metabolic genes. Does not regulate the expression of the DELLA genes RGA and RGA1. Activated by PIL5, a phytochrome-interacting basic helix-loop-helix transcription factor. Represses directly JMJ20 and JMJ22 expression in the absence of red light (R) and in far-red (FR) conditions. The chain is Zinc finger CCCH domain-containing protein 2 from Arabidopsis thaliana (Mouse-ear cress).